The chain runs to 312 residues: MKVAVLGAAGGIGQALALLLKTQLPSGSELSLYDIAPVTPGVAVDLSHIPTAVKIKGFSGEDATSALEGADVVLISAGVARKPGMDRSDLFNVNAGIVKNLVQQVAKTCPKACIGIITNPVNTTVAIAAEVLKKAGVYDKNKLFGVTTLDIIRSNTFVAELKGKQPGEVEVPVIGGHSGVTILPLLSQVPGVSFTEQEVADLTKRIQNAGTEVVEAKAGGGSATLSMGQAAARFGLSLVRALQGEQGVVECAYVEGDGQYARFFSQPLLLGKNGVEERKSIGTLSAFEQNALEGMLDTLKKDIALGEEFVNK.

NAD(+) is bound by residues 7 to 13 (GAAGGIG) and aspartate 34. Substrate-binding residues include arginine 81 and arginine 87. NAD(+)-binding positions include asparagine 94 and 117 to 119 (ITN). Substrate contacts are provided by asparagine 119 and arginine 153. Histidine 177 serves as the catalytic Proton acceptor. Position 227 (methionine 227) interacts with NAD(+).

This sequence belongs to the LDH/MDH superfamily. MDH type 1 family. As to quaternary structure, homodimer.

The catalysed reaction is (S)-malate + NAD(+) = oxaloacetate + NADH + H(+). Catalyzes the reversible oxidation of malate to oxaloacetate. This chain is Malate dehydrogenase, found in Escherichia coli (strain ATCC 8739 / DSM 1576 / NBRC 3972 / NCIMB 8545 / WDCM 00012 / Crooks).